The primary structure comprises 326 residues: MALTEQKRVRLEKLSDENGIISALAFDQRGALKRLMAQHQTEEPTVAQMEELKVLVADELTKYASSMLLDPEYGLPATKALDEKAGLLLAYEKTGYDTTSTKRLPDCLDVWSAKRIKEEGADAVKFLLYYDVDSSDELNQEKQAYIERIGSECVAEDIPFFLEILAYDEKIADAGSVEYAKVKPHKVIGAMKVFSDPRFNIDVLKVEVPVNIKYVEGFAEGEVVYTREEAAAFFKAQDEATNFPYIYLSAGVSAKLFQDTLVFAHESGANFNGVLCGRATWAGSVEAYIKDGEAAAREWLRTTGFENIDELNKVLQTTATSWKERV.

The protein belongs to the aldolase LacD family.

It catalyses the reaction D-tagatofuranose 1,6-bisphosphate = D-glyceraldehyde 3-phosphate + dihydroxyacetone phosphate. It functions in the pathway carbohydrate metabolism; D-tagatose 6-phosphate degradation; D-glyceraldehyde 3-phosphate and glycerone phosphate from D-tagatose 6-phosphate: step 2/2. In Streptococcus pneumoniae (strain ATCC BAA-255 / R6), this protein is Tagatose 1,6-diphosphate aldolase.